The following is a 185-amino-acid chain: Large ribosomal subunit protein uL5 (185 aa).

The protein belongs to the universal ribosomal protein uL5 family. As to quaternary structure, part of the 50S ribosomal subunit; part of the 5S rRNA/L5/L18/L25 subcomplex. Contacts the 5S rRNA and the P site tRNA. Forms a bridge to the 30S subunit in the 70S ribosome.

Functionally, this is one of the proteins that bind and probably mediate the attachment of the 5S RNA into the large ribosomal subunit, where it forms part of the central protuberance. In the 70S ribosome it contacts protein S13 of the 30S subunit (bridge B1b), connecting the 2 subunits; this bridge is implicated in subunit movement. Contacts the P site tRNA; the 5S rRNA and some of its associated proteins might help stabilize positioning of ribosome-bound tRNAs. The sequence is that of Large ribosomal subunit protein uL5 from Bradyrhizobium diazoefficiens (strain JCM 10833 / BCRC 13528 / IAM 13628 / NBRC 14792 / USDA 110).